Consider the following 61-residue polypeptide: Large ribosomal subunit protein uL30 (61 aa).

Belongs to the universal ribosomal protein uL30 family. In terms of assembly, part of the 50S ribosomal subunit.

This Chromohalobacter salexigens (strain ATCC BAA-138 / DSM 3043 / CIP 106854 / NCIMB 13768 / 1H11) protein is Large ribosomal subunit protein uL30.